The sequence spans 202 residues: Probable 1-Cys peroxiredoxin (202 aa).

A Thioredoxin domain is found at Ser-1–Thr-148. Cys-30 (cysteine sulfenic acid (-SOH) intermediate) is an active-site residue. The short motif at Lys-178–Lys-201 is the Bipartite nuclear localization signal element.

This sequence belongs to the peroxiredoxin family. Prx6 subfamily. As to expression, embryos.

It localises to the nucleus. The protein resides in the cytoplasm. The catalysed reaction is a hydroperoxide + [thioredoxin]-dithiol = an alcohol + [thioredoxin]-disulfide + H2O. Functionally, thiol-specific peroxidase that catalyzes the reduction of hydrogen peroxide and organic hydroperoxides to water and alcohols, respectively. Seems to contribute to the inhibition of germination during stress. This chain is Probable 1-Cys peroxiredoxin, found in Bromus secalinus (Rye brome).